The chain runs to 447 residues: Putative branched-chain amino acid carrier protein SERP0977 (447 aa).

12 helical membrane passes run T5–P25, I40–L60, P74–I94, G114–L134, I143–F163, G193–I213, I229–I249, L290–V310, I317–L337, V350–A370, I382–I402, and L417–V437.

It belongs to the branched chain amino acid transporter family.

The protein resides in the cell membrane. In terms of biological role, component of the transport system for branched-chain amino acids (leucine, isoleucine and valine), which is coupled to a proton motive force. This is Putative branched-chain amino acid carrier protein SERP0977 from Staphylococcus epidermidis (strain ATCC 35984 / DSM 28319 / BCRC 17069 / CCUG 31568 / BM 3577 / RP62A).